A 247-amino-acid chain; its full sequence is Phosphoribosylaminoimidazole-succinocarboxamide synthase (247 aa).

It belongs to the SAICAR synthetase family.

The enzyme catalyses 5-amino-1-(5-phospho-D-ribosyl)imidazole-4-carboxylate + L-aspartate + ATP = (2S)-2-[5-amino-1-(5-phospho-beta-D-ribosyl)imidazole-4-carboxamido]succinate + ADP + phosphate + 2 H(+). Its pathway is purine metabolism; IMP biosynthesis via de novo pathway; 5-amino-1-(5-phospho-D-ribosyl)imidazole-4-carboxamide from 5-amino-1-(5-phospho-D-ribosyl)imidazole-4-carboxylate: step 1/2. The polypeptide is Phosphoribosylaminoimidazole-succinocarboxamide synthase (Synechococcus sp. (strain JA-2-3B'a(2-13)) (Cyanobacteria bacterium Yellowstone B-Prime)).